The primary structure comprises 915 residues: Probable LRR receptor-like serine/threonine-protein kinase At2g16250 (915 aa).

A signal peptide spans 1-28 (MVDQRRSALGFVLLLLCLVLFFDCVVVG). Residues 29-451 (QTQSRFSEKL…ISRRTVIILA (423 aa)) are Extracellular-facing. 7 N-linked (GlcNAc...) asparagine glycosylation sites follow: N71, N78, N101, N109, N150, N158, and N177. 11 LRR repeats span residues 102–125 (LTRL…WFGV), 127–150 (LLAL…TLGN), 151–174 (LTSL…SLGQ), 176–198 (LNLS…SFSS), 199–223 (LKNL…LGAL), 225–247 (KLIH…LGDL), 248–271 (VNLV…LRKL), 272–295 (SKLQ…LFSA), 297–320 (SQLQ…CWSL), 321–344 (PKLR…SYDS), and 366–390 (LRRF…VTGE). N-linked (GlcNAc...) asparagine glycosylation is present at N230. N332 carries N-linked (GlcNAc...) asparagine glycosylation. 3 N-linked (GlcNAc...) asparagine glycosylation sites follow: N391, N429, and N437. The helical transmembrane segment at 452–472 (AVGGGVAFILLFVILPIILVL) threads the bilayer. Residues 473–915 (CMRHRRRAAQ…AAYGVVEDNL (443 aa)) are Cytoplasmic-facing. Residues 482–503 (QRGNNDRPKPAGEASQQPPKGA) form a disordered region. Residues 527–811 (FNDANLIKRG…IVNALENPLK (285 aa)) form the Protein kinase domain. ATP contacts are provided by residues 533–541 (IKRGHSGNL) and K555. The active-site Proton acceptor is the D657. The interval 851-915 (TAVQAGATTS…AAYGVVEDNL (65 aa)) is disordered. Positions 859 to 870 (TSGGGGGGGGNG) are enriched in gly residues. The span at 871 to 892 (LRNSGSQGSSGRNNNNNGNSSS) shows a compositional bias: low complexity.

Belongs to the protein kinase superfamily. Ser/Thr protein kinase family.

It localises to the membrane. The catalysed reaction is L-seryl-[protein] + ATP = O-phospho-L-seryl-[protein] + ADP + H(+). The enzyme catalyses L-threonyl-[protein] + ATP = O-phospho-L-threonyl-[protein] + ADP + H(+). In Arabidopsis thaliana (Mouse-ear cress), this protein is Probable LRR receptor-like serine/threonine-protein kinase At2g16250.